Reading from the N-terminus, the 426-residue chain is Tyrosine--tRNA ligase (426 aa).

Tyr35 serves as a coordination point for L-tyrosine. Positions 40 to 49 match the 'HIGH' region motif; it reads PTAPSLHIGH. 2 residues coordinate L-tyrosine: Tyr174 and Gln178. The 'KMSKS' region signature appears at 234–238; it reads KFGKT. Residue Lys237 participates in ATP binding. One can recognise an S4 RNA-binding domain in the interval 358 to 418; it reads PRVVDALVAT…WAVIRRGRRA (61 aa).

It belongs to the class-I aminoacyl-tRNA synthetase family. TyrS type 1 subfamily. In terms of assembly, homodimer.

The protein localises to the cytoplasm. It carries out the reaction tRNA(Tyr) + L-tyrosine + ATP = L-tyrosyl-tRNA(Tyr) + AMP + diphosphate + H(+). Its function is as follows. Catalyzes the attachment of tyrosine to tRNA(Tyr) in a two-step reaction: tyrosine is first activated by ATP to form Tyr-AMP and then transferred to the acceptor end of tRNA(Tyr). This is Tyrosine--tRNA ligase from Acidothermus cellulolyticus (strain ATCC 43068 / DSM 8971 / 11B).